Reading from the N-terminus, the 111-residue chain is DNA-directed RNA polymerase subunit Rpo11 (111 aa).

The protein belongs to the archaeal Rpo11/eukaryotic RPB11/RPC19 RNA polymerase subunit family. As to quaternary structure, part of the RNA polymerase complex.

It is found in the cytoplasm. The enzyme catalyses RNA(n) + a ribonucleoside 5'-triphosphate = RNA(n+1) + diphosphate. Functionally, DNA-dependent RNA polymerase (RNAP) catalyzes the transcription of DNA into RNA using the four ribonucleoside triphosphates as substrates. The sequence is that of DNA-directed RNA polymerase subunit Rpo11 from Thermoplasma acidophilum (strain ATCC 25905 / DSM 1728 / JCM 9062 / NBRC 15155 / AMRC-C165).